Reading from the N-terminus, the 520-residue chain is MSIPKSCEVLVAGGGPAGSYAASALAREGVDVVLLEADKHPRYHIGESMLPSIRPLLRFIDLEETFEKHGFQKKLGAAFKLTAKREGYTDFVAAHGPNGYSWNVVRSESDELLFKHAAKSGALTFQGVKVDSLEFEPYDSDFPSGGKVANPGRPVAARWSAKDGRSGTISFQYLVDATGRAGITSTKYLKNRKFNEGLKNLAIWGYYKGARPWAEGTPRENQPYFEGMRDGAGWCWTIPLHNGTVSVGAVLRSDLFFAKKKSLGEDVTNAMIMAECMKLCPTIKELLEPAELVSDIKQATDYSYSASAYAGPYFRIVGDAGCFIDPFFSSGHHLAMAGALAAAVSIRASMKGDCSEYEASNWHARKVDEGYTLFLLVVMAALKQIRMQEEPVLSDIDDDGFDRAFQFLKPVIQGSGSAEIVKRFTKKEVSEAIDFAVLALDNMAGAGEHANETNGSNGTGETNGDAKTLENITVEDEKVLSGIRILAKVAPSADMKDLEGTAIDGFMPRLEHGHLGLNRV.

Residues glycine 14, alanine 17, and glutamate 47 each coordinate FAD. Serine 330 and glycine 331 together coordinate chloride.

This sequence belongs to the flavin-dependent halogenase family.

Its pathway is secondary metabolite biosynthesis. Non-heme halogenase; part of the gene cluster that mediates the biosynthesis of radicicol, a resorcylic acid lactone (RAL) that irreversibly inhibits the HSP90 molecular chaperone, an important target for cancer chemotherapy. The cluster encodes only two apparent post-PKS enzymes, a cytochrome P450 monooxygenase (radP) and a non-heme halogenase (radH) that introduce the epoxide and the chlorine, respectively. If this cluster includes all the genes required for radicicol biosynthesis, the remaining structural features of radicicol are presumably generated by the PKSs rads1 and rads2. The C-2' ketone could arise if the R-PKS rads1 and NR-PKS rads2 each carry out four iterations, in contrast to the five iteration-three iteration split for the hypothemycin PKSs. The origin of the cis 5',6' double bond is not known. The radicicol R-PKS rads1 ER domain may catalyze either double bond isomerization or reduction in the third iteration. The chain is Flavin-dependent halogenase radH from Floropilus chiversii (Chaetomium chiversii).